The chain runs to 518 residues: MAFWAGGSPSVVDYFPSEDFYRCGYCKNESGSRSNGMWAHSMTVQDYQDLIDRGWRRSGKYVYKPVMNQTCCPQYTIRCRPLQFQPSKSHKKVLKKMLKFLAKGEVPKGSCEDEPMDSTMDDAVAGDFALINKLDIQCDLKTLSDDVKESLQSEGKNSKKEEPHELLQSQDSVGEKLGSGEPSHSVKVHTVPKPGKGADLSKPPCRKAKEIRKERKRLKLMQQNPAGELEGFQAQGHPPSLFPPKAKSNQPKSLEDLIFESLPENASHKLEVRLVPASFEDPEFKSSFSQSFSLYVKYQVAIHQDLPDECGKTEFTRFLCSSPLEAETPPNGPDCGYGSFHQQYWLDGKIIAVGVIDILPNYVSSVYLYYDPDYSFLSLGVYSALREIAFTRQLHEKTSQLSYYYMGFYIHSCPKMKYKGQYRPSDLLCPETYVWVPIEQCLPSLENSKYCRFNQDPEAVDEDRSTEPDRLQVFHKRAIMPYGVYKKQQKDPSEEAAVLQYASLVGQKCSERMLLFRN.

Over residues 149-165 (ESLQSEGKNSKKEEPHE) the composition is skewed to basic and acidic residues. A disordered region spans residues 149–207 (ESLQSEGKNSKKEEPHELLQSQDSVGEKLGSGEPSHSVKVHTVPKPGKGADLSKPPCRK). Residue Ser-169 is modified to Phosphoserine.

This sequence belongs to the R-transferase family. Monomer. Interacts with LIAT1; LIAT1 is not a substrate of ATE1, the interaction takes place in the cytoplasm and seems to increase ATE1 arginyltransferase activity.

The protein resides in the nucleus. It is found in the cytoplasm. The enzyme catalyses an N-terminal L-alpha-aminoacyl-[protein] + L-arginyl-tRNA(Arg) = an N-terminal L-arginyl-L-aminoacyl-[protein] + tRNA(Arg) + H(+). Involved in the post-translational conjugation of arginine to the N-terminal aspartate or glutamate of a protein. This arginylation is required for degradation of the protein via the ubiquitin pathway. Does not arginylate cysteine residues. The polypeptide is Arginyl-tRNA--protein transferase 1 (ATE1) (Macaca fascicularis (Crab-eating macaque)).